The following is a 424-amino-acid chain: Probable ribonuclease FAU-1 (424 aa).

It belongs to the FAU-1 family.

Its function is as follows. Probable RNase involved in rRNA stability through maturation and/or degradation of precursor rRNAs. Binds to RNA in loop regions with AU-rich sequences. This Saccharolobus islandicus (strain Y.G.57.14 / Yellowstone #1) (Sulfolobus islandicus) protein is Probable ribonuclease FAU-1.